Consider the following 225-residue polypeptide: NAD(P)H-quinone oxidoreductase subunit K, chloroplastic (225 aa).

[4Fe-4S] cluster contacts are provided by Cys43, Cys44, Cys108, and Cys139.

It belongs to the complex I 20 kDa subunit family. In terms of assembly, NDH is composed of at least 16 different subunits, 5 of which are encoded in the nucleus. The cofactor is [4Fe-4S] cluster.

The protein localises to the plastid. The protein resides in the chloroplast thylakoid membrane. It carries out the reaction a plastoquinone + NADH + (n+1) H(+)(in) = a plastoquinol + NAD(+) + n H(+)(out). The catalysed reaction is a plastoquinone + NADPH + (n+1) H(+)(in) = a plastoquinol + NADP(+) + n H(+)(out). NDH shuttles electrons from NAD(P)H:plastoquinone, via FMN and iron-sulfur (Fe-S) centers, to quinones in the photosynthetic chain and possibly in a chloroplast respiratory chain. The immediate electron acceptor for the enzyme in this species is believed to be plastoquinone. Couples the redox reaction to proton translocation, and thus conserves the redox energy in a proton gradient. This Dioscorea elephantipes (Elephant's foot yam) protein is NAD(P)H-quinone oxidoreductase subunit K, chloroplastic.